Here is a 395-residue protein sequence, read N- to C-terminus: GPI-anchor transamidase (395 aa).

The signal sequence occupies residues 1 to 27 (MAAPCFLTLRVATLAALALLSLGSSAA). Over 28 to 368 (GHIEDQAEQF…PKPRDWHPPG (341 aa)) the chain is Lumenal. 4 residues coordinate Ca(2+): Asp-79, Ile-82, Glu-118, and Asp-120. Catalysis depends on His-164, which acts as the Proton donor. The Nucleophile; acyl-thioester intermediate role is filled by Cys-206. 3 residues coordinate a protein: Cys-206, Ser-232, and Ser-234. Residues 231-236 (DSLSHQ) are autoinhibitory loop. Residues Cys-275 and Cys-280 are joined by a disulfide bond. Residues 369–385 (GFILGLWALIIMVFFKT) form a helical membrane-spanning segment. At 386-395 (YGIKHMKFIF) the chain is on the cytoplasmic side.

The protein belongs to the peptidase C13 family. In terms of assembly, heteropentamer. Part of the GPI-anchor transamidase complex, consisting of PIGK, PIGT, PIGS, PIGU and GAA1. Interacts with GPAA1. Interacts with PIGT; this interaction, via a disulfide link, stabilizes the expression of GAA1 and PIGK and links them to PIGS. Post-translationally, the disulfide bond between PIGK/GPI8 and PIGT is important for normal enzyme activity.

The protein localises to the endoplasmic reticulum membrane. Its pathway is glycolipid biosynthesis; glycosylphosphatidylinositol-anchor biosynthesis. Its activity is regulated as follows. In the absence of proproteins substrates, exists in an inactive state with a disrupted catalytic site by an autoinhibitory loop. The binding of proprotein substrates, particularly the CSP region, to GPI-T triggers concerted conformational changes that alleviate the inhibition by the autoinhibitory loop. Meanwhile, proprotein residues near the omega- site induce the formation of a catalytic cleft for catalysis, following which the products are released and GPI-T reverts to the inactive state. Its function is as follows. Catalytic subunit of the glycosylphosphatidylinositol-anchor (GPI-anchor) transamidase (GPI-T) complex that catalyzes the formation of the linkage between a proprotein and a GPI-anchor and participates in GPI anchored protein biosynthesis. Recognizes diverse proproteins at a C-terminal signal peptide (CSP) region that lacks consensus sequence and replaces it with a GPI-anchor via a transamidation reaction. Transamidation catalysis reaction follows a two-phase mechanism. In the acyl-enzyme phase, the carbonyl group of the proproteins's omega-site undergoes a nucleophilic attack forming an enzyme-substrate thioester bond. Followed by a general acid catalysis that allows CSP releasing, regenerating the carbonyl, and forming the acyl-enzyme intermediate. In the GPI-anchor attachment phase, the amino group of the GPI-anchor's ethanolamine phosphate, the one on third mannose (EtNP3), mediates a nucleophilic attack on the carbonyl of the acyl-enzyme intermediate, replacing the CSP, allowing GPI-anchor attachment to the omega-residue, therefore forming the product and freeing the enzyme. This chain is GPI-anchor transamidase, found in Mus musculus (Mouse).